The primary structure comprises 137 residues: Large ribosomal subunit protein uL16 (137 aa).

This sequence belongs to the universal ribosomal protein uL16 family. Part of the 50S ribosomal subunit.

Its function is as follows. Binds 23S rRNA and is also seen to make contacts with the A and possibly P site tRNAs. The polypeptide is Large ribosomal subunit protein uL16 (Streptococcus suis (strain 98HAH33)).